Reading from the N-terminus, the 351-residue chain is UDP-N-acetylglucosamine--N-acetylmuramyl-(pentapeptide) pyrophosphoryl-undecaprenol N-acetylglucosamine transferase (351 aa).

UDP-N-acetyl-alpha-D-glucosamine-binding positions include 13–15, Asn-125, Arg-161, Ser-189, Ile-241, 260–265, and Gln-285; these read TGG and ALTVCE.

This sequence belongs to the glycosyltransferase 28 family. MurG subfamily.

The protein resides in the cell inner membrane. It carries out the reaction di-trans,octa-cis-undecaprenyl diphospho-N-acetyl-alpha-D-muramoyl-L-alanyl-D-glutamyl-meso-2,6-diaminopimeloyl-D-alanyl-D-alanine + UDP-N-acetyl-alpha-D-glucosamine = di-trans,octa-cis-undecaprenyl diphospho-[N-acetyl-alpha-D-glucosaminyl-(1-&gt;4)]-N-acetyl-alpha-D-muramoyl-L-alanyl-D-glutamyl-meso-2,6-diaminopimeloyl-D-alanyl-D-alanine + UDP + H(+). Its pathway is cell wall biogenesis; peptidoglycan biosynthesis. In terms of biological role, cell wall formation. Catalyzes the transfer of a GlcNAc subunit on undecaprenyl-pyrophosphoryl-MurNAc-pentapeptide (lipid intermediate I) to form undecaprenyl-pyrophosphoryl-MurNAc-(pentapeptide)GlcNAc (lipid intermediate II). This is UDP-N-acetylglucosamine--N-acetylmuramyl-(pentapeptide) pyrophosphoryl-undecaprenol N-acetylglucosamine transferase from Haemophilus influenzae (strain PittGG).